Consider the following 131-residue polypeptide: Small ribosomal subunit protein uS8 (131 aa).

It belongs to the universal ribosomal protein uS8 family. As to quaternary structure, part of the 30S ribosomal subunit. Contacts proteins S5 and S12.

One of the primary rRNA binding proteins, it binds directly to 16S rRNA central domain where it helps coordinate assembly of the platform of the 30S subunit. The polypeptide is Small ribosomal subunit protein uS8 (Geobacillus stearothermophilus (Bacillus stearothermophilus)).